The following is a 176-amino-acid chain: Inner membrane-spanning protein YciB (176 aa).

Helical transmembrane passes span 23 to 43 (MIAA…FLYW), 50 to 70 (TMQW…IVLG), 74 to 94 (FIMW…LGSH), 119 to 139 (LTYM…FVFT), and 150 to 170 (MFGS…YLST).

It belongs to the YciB family.

It is found in the cell inner membrane. Plays a role in cell envelope biogenesis, maintenance of cell envelope integrity and membrane homeostasis. The sequence is that of Inner membrane-spanning protein YciB from Neisseria gonorrhoeae (strain ATCC 700825 / FA 1090).